Here is a 436-residue protein sequence, read N- to C-terminus: Alpha-2 adrenergic receptor (436 aa).

At 1 to 27 (MDVTQSNATKDDANITVTPWPYTETAA) the chain is on the extracellular side. N-linked (GlcNAc...) asparagine glycans are attached at residues Asn7 and Asn14. Residues 28 to 52 (AFIILVVSVIILVSIVGNVLVIVAV) form a helical membrane-spanning segment. Residues 53 to 64 (LTSRALRAPQNL) lie on the Cytoplasmic side of the membrane. Residues 65–90 (FLVSLACADILVATLVIPFSLANEIM) traverse the membrane as a helical segment. The Extracellular portion of the chain corresponds to 91–100 (GYWFFGSTWC). Cys100 and Cys173 are oxidised to a cystine. Residues 101 to 123 (AFYLALDVLFCTSSIVHLCAISL) traverse the membrane as a helical segment. The Cytoplasmic portion of the chain corresponds to 124-144 (DRYWSVTKAVSYNLKRTPKRI). Residues 145-167 (KSMIAVVWVISAVISFPPLIMTK) traverse the membrane as a helical segment. Over 168-178 (HDEKECLINDE) the chain is Extracellular. Residues 179–202 (TWYILSSSLVSFFAPGFIMITVYC) traverse the membrane as a helical segment. The Cytoplasmic portion of the chain corresponds to 203-329 (KIYRVAKQRS…QMREKRFTFV (127 aa)). A disordered region spans residues 238 to 280 (KFEKESPSSNSSESNQRQEELDDIDLEESATSDNKPKSSRFSN). Residues 257–267 (ELDDIDLEESA) are compositionally biased toward acidic residues. The chain crosses the membrane as a helical span at residues 330 to 353 (LTVVMGVFVLCWFPFFFTYSLHAI). The Extracellular segment spans residues 354-366 (CGDSCEPPEALFK). Residues 367-387 (LFFWIGYCNSSVNPIIYTIFN) form a helical membrane-spanning segment. The Cytoplasmic segment spans residues 388–436 (RDFRKAFKKICLLDCAAHLRDSCLGTLGRLNAKCIFECHQKSNQEETAN).

It belongs to the G-protein coupled receptor 1 family.

Its subcellular location is the cell membrane. Functionally, alpha-2 adrenergic receptors mediate the catecholamine-induced inhibition of adenylate cyclase through the action of G proteins. This chain is Alpha-2 adrenergic receptor, found in Carassius auratus (Goldfish).